Here is a 162-residue protein sequence, read N- to C-terminus: MERILENAMYAARWLLAPIYFGLAFALLALAIKFFQEIFHILPMILSISEADLVLTLLSLIDMALVGGLLVMVMISGYENFVSQLDVDEGKEKLDWLGKMDSSSLKLKVAASIVAISSIHLLRMFMDVQQIDSEKLMWYVIIHLTFVVSAFAMGYMDKITKH.

The next 3 helical transmembrane spans lie at 15 to 35, 53 to 73, and 136 to 156; these read LLAP…IKFF, LVLT…LVMV, and LMWY…MGYM.

It belongs to the UPF0114 family.

The protein resides in the cell membrane. The protein is UPF0114 protein PST_0950 of Stutzerimonas stutzeri (strain A1501) (Pseudomonas stutzeri).